A 399-amino-acid polypeptide reads, in one-letter code: MKSVEEQLALIQRGADEILVEAELVAKLKRGQPLRIKAGFDPTAPDLHLGHTVLINKLRQFQDLGHQVIFLIGDFTGMIGDPSGKSVTRPPLTREQVLENAETYKSQVFKILDPAKTEVAFNSTWMDQLTPADFIRLASQYTVARMLERDDFSKRYASNQPIAIHEFLYPLVQGYDSVALKADVELGGTDQKFNLLMGRELQRAYGQEAQVILTMPLLEGLDGVKKMSKSLGNYIGIQEAPGVMYSKLVSIPDTLMWRYFELLSFRSLDEIDSFRKDVEAGANPRDIKIKLAEEIVARFHGEEAAASAHKSAGNRLKEGELPEDLPEIELSSPEDMPVASVLNKAGLVKNAAAARDLLGAGSVKVDGQVVDRTFMLALGETRVFQAGKKAFARITLKAE.

A 'HIGH' region motif is present at residues 42-51 (PTAPDLHLGH). Positions 226 to 230 (KMSKS) match the 'KMSKS' region motif. Position 229 (Lys229) interacts with ATP. Positions 336–396 (MPVASVLNKA…GKKAFARITL (61 aa)) constitute an S4 RNA-binding domain.

It belongs to the class-I aminoacyl-tRNA synthetase family. TyrS type 2 subfamily. As to quaternary structure, homodimer.

It localises to the cytoplasm. It catalyses the reaction tRNA(Tyr) + L-tyrosine + ATP = L-tyrosyl-tRNA(Tyr) + AMP + diphosphate + H(+). Its function is as follows. Catalyzes the attachment of tyrosine to tRNA(Tyr) in a two-step reaction: tyrosine is first activated by ATP to form Tyr-AMP and then transferred to the acceptor end of tRNA(Tyr). This is Tyrosine--tRNA ligase 2 from Pseudomonas aeruginosa (strain ATCC 15692 / DSM 22644 / CIP 104116 / JCM 14847 / LMG 12228 / 1C / PRS 101 / PAO1).